A 364-amino-acid chain; its full sequence is Deoxyribonuclease-2-alpha (364 aa).

An N-terminal signal peptide occupies residues 1-21 (MATLSPLLLAALLWVPVGTLT). Cys22 and Cys161 form a disulfide bridge. Residues Asn72, Asn88, Asn171, Asn214, Asn268, and Asn292 are each glycosylated (N-linked (GlcNAc...) asparagine). 2 cysteine pairs are disulfide-bonded: Cys269–Cys349 and Cys310–Cys329. His297 is a catalytic residue.

This sequence belongs to the DNase II family.

It is found in the lysosome. The catalysed reaction is Endonucleolytic cleavage to nucleoside 3'-phosphates and 3'-phosphooligonucleotide end-products.. Its function is as follows. Hydrolyzes DNA under acidic conditions with a preference for double-stranded DNA. Plays a major role in the clearance of nucleic acids generated through apoptosis, hence preventing autoinflammation. Necessary for proper fetal development and for definitive erythropoiesis in fetal liver and bone marrow, where it degrades nuclear DNA expelled from erythroid precursor cells. The protein is Deoxyribonuclease-2-alpha (DNASE2) of Sus scrofa (Pig).